The primary structure comprises 776 residues: Reticulon-1 (776 aa).

Disordered regions lie at residues 1 to 103 (MAAP…GEGS), 136 to 168 (ISES…DSGI), 204 to 244 (EVKH…EPAP), and 285 to 580 (LTEI…APPP). The segment covering 204–240 (EVKHQEQNHPELEDKDLDFKNKDTDISIKPEGVREPD) has biased composition (basic and acidic residues). A Phosphoserine modification is found at Ser-327. Low complexity predominate over residues 328–341 (PGSITPPSSGTEPS). 3 positions are modified to phosphoserine: Ser-350, Ser-352, and Ser-487. The segment covering 497 to 511 (AIREETGVRAEERAP) has biased composition (basic and acidic residues). Residues 589–776 (AIDLLYWRDI…KIPGAKRHAE (188 aa)) enclose the Reticulon domain. A run of 2 helical transmembrane segments spans residues 603 to 623 (IVFG…VVSV) and 705 to 725 (FAVL…LTLL).

In terms of assembly, interacts with NDRG1. Interacts with BACE1. Interacts with TMEM33. Post-translationally, phosphorylated.

The protein resides in the endoplasmic reticulum membrane. Its subcellular location is the golgi apparatus membrane. Its function is as follows. Inhibits amyloid precursor protein processing, probably by blocking BACE1 activity. The protein is Reticulon-1 (RTN1) of Pan troglodytes (Chimpanzee).